The following is a 658-amino-acid chain: ATP-dependent RNA helicase DDX3Y (658 aa).

The segment at 1–143 (MSQVAAESTA…DWSKPLPPSE (143 aa)) is disordered. At Ser-2 the chain carries N-acetylserine. The span at 45–69 (RNRETSKGVCDKDSSGWSCSKDKDA) shows a compositional bias: basic and acidic residues. Lys-56 carries the N6-acetyllysine modification. Phosphoserine occurs at positions 86 and 90. Residues 94–129 (GRFDDHGRNDYDGIGGRDRTGFGKFERSGHSRWSDR) show a composition bias toward basic and acidic residues. Arg-101 carries the omega-N-methylarginine modification. Tyr-104 is modified (phosphotyrosine). Residue Arg-110 is modified to Omega-N-methylarginine. Lys-117 carries the N6-acetyllysine modification. Ser-130 and Ser-182 each carry phosphoserine. Positions 179 to 207 (ENFSDIEMGEIIMGNIELTRYTRPTPVQK) match the Q motif motif. 199-206 (YTRPTPVQ) contacts ATP. The Helicase ATP-binding domain occupies 210–402 (IPIIKEKRDL…RDFLDEYIFL (193 aa)). A Glycyl lysine isopeptide (Lys-Gly) (interchain with G-Cter in SUMO2) cross-link involves residue Lys-214. 223–230 (AQTGSGKT) contributes to the ATP binding site. A DEAD box motif is present at residues 346 to 349 (DEAD). The Helicase C-terminal domain occupies 413 to 574 (NITQKVVWVE…EVPSWLESMA (162 aa)). Residue Ser-455 is modified to Phosphoserine. An Omega-N-methylarginine modification is found at Arg-590. Ser-592 and Ser-603 each carry phosphoserine. Residues 597 to 627 (ARDYRQSSGSANAGFNSNRANSSRSSGSSHN) are disordered. The segment covering 603–627 (SSGSANAGFNSNRANSSRSSGSSHN) has biased composition (low complexity). Residues Arg-615 and Arg-628 each carry the omega-N-methylarginine modification.

The protein belongs to the DEAD box helicase family. DDX3/DED1 subfamily. Found in heart, brain, liver, skeletal muscle, kidney and testis. Low expression detected in lung. In testis, expressed in all types of spermatogenic cells including spermatogonia, spermatocytes, spermatids and somatic Sertoli cells within the seminiferous tubules. Also expressed in Leydig cells and other interstitial cells.

Its subcellular location is the cytoplasm. It localises to the nucleus. It catalyses the reaction ATP + H2O = ADP + phosphate + H(+). Its function is as follows. Probable ATP-dependent RNA helicase. During immune response, may enhance IFNB1 expression via IRF3/IRF7 pathway. The polypeptide is ATP-dependent RNA helicase DDX3Y (Ddx3y) (Mus musculus (Mouse)).